Consider the following 828-residue polypeptide: Chitin synthase 7 (828 aa).

The next 6 helical transmembrane spans lie at 17-37, 57-77, 95-115, 444-464, 473-493, and 501-521; these read VIVGLVMLAAVLEWFLWVAAF, AVVVAILFVGFRAVFLPIMVV, VGLQWFAFWAFAGLLTIPWLF, FMQNTIRTTALLFFIMVLAIL, LPVGFIAISLGLNWLMMIYFG, and IWLYPLMFVLNPFFNWWYMVY. Asn615 is a glycosylation site (N-linked (GlcNAc...) asparagine). Composition is skewed to low complexity over residues 740–752 and 813–822; these read SLVSLGSSASNSN and SNNDPNNSNS. Disordered stretches follow at residues 740–780 and 793–828; these read SLVS…LGRA and LEIGTSHGSSANRPALSRQASNNDPNNSNSGGHQQR. N-linked (GlcNAc...) asparagine glycosylation occurs at Asn818.

The protein belongs to the chitin synthase family. Class VII subfamily.

Its subcellular location is the membrane. It catalyses the reaction [(1-&gt;4)-N-acetyl-beta-D-glucosaminyl](n) + UDP-N-acetyl-alpha-D-glucosamine = [(1-&gt;4)-N-acetyl-beta-D-glucosaminyl](n+1) + UDP + H(+). Polymerizes chitin, a structural polymer of the cell wall and septum, by transferring the sugar moiety of UDP-GlcNAc to the non-reducing end of the growing chitin polymer. Required for normal appressorial chitin content and for the normal formation and function of these infection structures. The chain is Chitin synthase 7 from Pyricularia oryzae (strain 70-15 / ATCC MYA-4617 / FGSC 8958) (Rice blast fungus).